The chain runs to 140 residues: Large ribosomal subunit protein uL11 (140 aa).

Belongs to the universal ribosomal protein uL11 family. In terms of assembly, part of the ribosomal stalk of the 50S ribosomal subunit. Interacts with L10 and the large rRNA to form the base of the stalk. L10 forms an elongated spine to which L12 dimers bind in a sequential fashion forming a multimeric L10(L12)X complex. One or more lysine residues are methylated.

Functionally, forms part of the ribosomal stalk which helps the ribosome interact with GTP-bound translation factors. This Syntrophotalea carbinolica (strain DSM 2380 / NBRC 103641 / GraBd1) (Pelobacter carbinolicus) protein is Large ribosomal subunit protein uL11.